The following is a 295-amino-acid chain: Protease HtpX (295 aa).

A run of 2 helical transmembrane segments spans residues 4 to 24 (ILLFVATNLAVVLVASITLSL) and 41 to 61 (GQLLVFCAVFGFAGSLVSLFI). His-147 is a binding site for Zn(2+). The active site involves Glu-148. His-151 is a binding site for Zn(2+). 2 helical membrane-spanning segments follow: residues 158-178 (VTMALVQGVVNTFVMFFARII) and 198-218 (FVATIVAELVLGILASIIVMW). Glu-224 contributes to the Zn(2+) binding site.

This sequence belongs to the peptidase M48B family. Zn(2+) is required as a cofactor.

It localises to the cell inner membrane. This is Protease HtpX from Pseudomonas entomophila (strain L48).